Reading from the N-terminus, the 109-residue chain is Elicitor peptide 2 (109 aa).

Residues 1-73 (MEKLDKRREE…KDDDVVVLLR (73 aa)) constitute a propeptide that is removed on maturation. The span at 74 to 88 (DNKAKSKKRDKEKPS) shows a compositional bias: basic and acidic residues. Residues 74-109 (DNKAKSKKRDKEKPSSGRPGQTNSVPNAAIQVYKED) form a disordered region.

It belongs to the brassicaceae elicitor peptide family.

In terms of biological role, elicitor of plant defense. The polypeptide is Elicitor peptide 2 (PEP2) (Arabidopsis thaliana (Mouse-ear cress)).